A 234-amino-acid chain; its full sequence is Coiled-coil domain-containing protein 194 (234 aa).

The first 43 residues, 1–43, serve as a signal peptide directing secretion; sequence MAEPGPEPGRAWRLLALCGAAVFLAAAAAGGALVAWNLAASTA. The segment at 44 to 63 is disordered; the sequence is RSPRCPEPEQMNATVRPPDS. A coiled-coil region spans residues 67-171; that stretch reads VEELRRRLAE…LQRAGAAEAA (105 aa). The disordered stretch occupies residues 194 to 234; sequence GTLRKESRLRPRSGSRTKPSISHRPKSGSTKGCRRPPRDPQ. Residues 203-219 show a composition bias toward basic residues; that stretch reads RPRSGSRTKPSISHRPK.

The polypeptide is Coiled-coil domain-containing protein 194 (Mus musculus (Mouse)).